Reading from the N-terminus, the 468-residue chain is ATP synthase subunit beta (468 aa).

An ATP-binding site is contributed by 148 to 155 (GGAGVGKT).

The protein belongs to the ATPase alpha/beta chains family. As to quaternary structure, F-type ATPases have 2 components, CF(1) - the catalytic core - and CF(0) - the membrane proton channel. CF(1) has five subunits: alpha(3), beta(3), gamma(1), delta(1), epsilon(1). CF(0) has three main subunits: a(1), b(2) and c(9-12). The alpha and beta chains form an alternating ring which encloses part of the gamma chain. CF(1) is attached to CF(0) by a central stalk formed by the gamma and epsilon chains, while a peripheral stalk is formed by the delta and b chains.

It is found in the cell inner membrane. It catalyses the reaction ATP + H2O + 4 H(+)(in) = ADP + phosphate + 5 H(+)(out). In terms of biological role, produces ATP from ADP in the presence of a proton gradient across the membrane. The catalytic sites are hosted primarily by the beta subunits. The polypeptide is ATP synthase subunit beta (Xanthomonas oryzae pv. oryzae (strain KACC10331 / KXO85)).